We begin with the raw amino-acid sequence, 1015 residues long: Probable beta-galactosidase B (1015 aa).

A signal peptide spans 1–20 (MAHIYRLLLLLLSNLWFSTA). Asn-23 is a glycosylation site (N-linked (GlcNAc...) asparagine). Tyr-90 is a substrate binding site. N-linked (GlcNAc...) asparagine glycosylation is found at Asn-99 and Asn-100. Substrate-binding residues include Asn-135, Ala-136, and Glu-137. Asn-172 carries N-linked (GlcNAc...) asparagine glycosylation. Residue Asn-195 participates in substrate binding. Glu-196 serves as the catalytic Proton donor. N-linked (GlcNAc...) asparagine glycosylation occurs at Asn-211. Position 265 (Tyr-265) interacts with substrate. A disulfide bridge connects residues Cys-271 and Cys-324. The active-site Nucleophile is the Glu-308. Tyr-373 contacts substrate. N-linked (GlcNAc...) asparagine glycosylation is found at Asn-411, Asn-456, Asn-554, Asn-679, Asn-735, Asn-775, and Asn-821.

The protein belongs to the glycosyl hydrolase 35 family.

It is found in the secreted. It catalyses the reaction Hydrolysis of terminal non-reducing beta-D-galactose residues in beta-D-galactosides.. Functionally, cleaves beta-linked terminal galactosyl residues from gangliosides, glycoproteins, and glycosaminoglycans. The polypeptide is Probable beta-galactosidase B (lacB) (Aspergillus fumigatus (strain CBS 144.89 / FGSC A1163 / CEA10) (Neosartorya fumigata)).